The chain runs to 268 residues: Indole-3-glycerol phosphate synthase (268 aa).

The protein belongs to the TrpC family.

It catalyses the reaction 1-(2-carboxyphenylamino)-1-deoxy-D-ribulose 5-phosphate + H(+) = (1S,2R)-1-C-(indol-3-yl)glycerol 3-phosphate + CO2 + H2O. It functions in the pathway amino-acid biosynthesis; L-tryptophan biosynthesis; L-tryptophan from chorismate: step 4/5. In Magnetococcus marinus (strain ATCC BAA-1437 / JCM 17883 / MC-1), this protein is Indole-3-glycerol phosphate synthase.